The sequence spans 131 residues: Inner membrane protein YecN (131 aa).

The Cytoplasmic portion of the chain corresponds to 1–107 (MVSALYAVLS…RWRRSGMSAT (107 aa)). Residues 108-128 (WCALLLMVLANLWYMPWELVF) form a helical membrane-spanning segment. Residues 129 to 131 (SLR) lie on the Periplasmic side of the membrane.

It localises to the cell inner membrane. This is Inner membrane protein YecN (yecN) from Escherichia coli O6:H1 (strain CFT073 / ATCC 700928 / UPEC).